A 341-amino-acid polypeptide reads, in one-letter code: Pyrophosphate--fructose 6-phosphate 1-phosphotransferase (341 aa).

Gly-10 provides a ligand contact to diphosphate. Glu-103 contributes to the Mg(2+) binding site. Substrate contacts are provided by residues 125–127 (TID), Arg-162, 169–171 (MGR), Glu-221, Arg-265, and 271–274 (HVQR). Asp-127 (proton acceptor) is an active-site residue.

It belongs to the phosphofructokinase type A (PFKA) family. Mixed-substrate PFK group III subfamily. As to quaternary structure, homodimer or homotetramer. Requires Mg(2+) as cofactor.

The protein localises to the cytoplasm. It carries out the reaction beta-D-fructose 6-phosphate + diphosphate = beta-D-fructose 1,6-bisphosphate + phosphate + H(+). It participates in carbohydrate degradation; glycolysis; D-glyceraldehyde 3-phosphate and glycerone phosphate from D-glucose: step 3/4. Non-allosteric. Catalyzes the phosphorylation of D-fructose 6-phosphate, the first committing step of glycolysis. Uses inorganic phosphate (PPi) as phosphoryl donor instead of ATP like common ATP-dependent phosphofructokinases (ATP-PFKs), which renders the reaction reversible, and can thus function both in glycolysis and gluconeogenesis. Consistently, PPi-PFK can replace the enzymes of both the forward (ATP-PFK) and reverse (fructose-bisphosphatase (FBPase)) reactions. The sequence is that of Pyrophosphate--fructose 6-phosphate 1-phosphotransferase from Amycolatopsis mediterranei (strain S699) (Nocardia mediterranei).